A 507-amino-acid chain; its full sequence is Probable cytosol aminopeptidase (507 aa).

The Mn(2+) site is built by Lys-275 and Asp-280. Lys-287 is a catalytic residue. The Mn(2+) site is built by Asp-298, Asp-357, and Glu-359. Arg-361 is a catalytic residue.

The protein belongs to the peptidase M17 family. It depends on Mn(2+) as a cofactor.

The protein localises to the cytoplasm. The enzyme catalyses Release of an N-terminal amino acid, Xaa-|-Yaa-, in which Xaa is preferably Leu, but may be other amino acids including Pro although not Arg or Lys, and Yaa may be Pro. Amino acid amides and methyl esters are also readily hydrolyzed, but rates on arylamides are exceedingly low.. It carries out the reaction Release of an N-terminal amino acid, preferentially leucine, but not glutamic or aspartic acids.. Functionally, presumably involved in the processing and regular turnover of intracellular proteins. Catalyzes the removal of unsubstituted N-terminal amino acids from various peptides. The chain is Probable cytosol aminopeptidase from Rhodopirellula baltica (strain DSM 10527 / NCIMB 13988 / SH1).